The following is a 236-amino-acid chain: MGLGLGVRAAPFTYAAHALAVAAAAMVLVWSIQFRGGLAIESTNKNLIFNVHPVLMLIGYVIIGGEAIMVYRVLPTSNHDTTKLIHLILHGIALVLGAVGIYFAFKNHNESGIANLYSLHSWIGIGTITLYGIQWIIGFVTFFFPGAAPNVKKGVLPWHVLFGLFVYILALANAELGFLEKLTFLESSGLDKYGTEAFLVNFTALVVVLFGASVVVAAIAPVRLEEPQGYDPIPEN.

Residues 1-11 lie on the Cytoplasmic side of the membrane; that stretch reads MGLGLGVRAAP. The helical transmembrane segment at 12-32 threads the bilayer; sequence FTYAAHALAVAAAAMVLVWSI. The 205-residue stretch at 15–219 folds into the Cytochrome b561 domain; it reads AAHALAVAAA…FGASVVVAAI (205 aa). Residues 33 to 50 lie on the Extracellular side of the membrane; that stretch reads QFRGGLAIESTNKNLIFN. The helical transmembrane segment at 51-71 threads the bilayer; that stretch reads VHPVLMLIGYVIIGGEAIMVY. His-52 provides a ligand contact to heme b. Residue 67–75 coordinates L-ascorbate; that stretch reads AIMVYRVLP. Residues 72 to 84 lie on the Cytoplasmic side of the membrane; the sequence is RVLPTSNHDTTKL. A helical membrane pass occupies residues 85–105; the sequence is IHLILHGIALVLGAVGIYFAF. His-86 and His-120 together coordinate heme b. Residues 106 to 122 lie on the Extracellular side of the membrane; that stretch reads KNHNESGIANLYSLHSW. Residue 116-125 participates in monodehydro-L-ascorbate radical binding; sequence LYSLHSWIGI. A helical membrane pass occupies residues 123-143; sequence IGIGTITLYGIQWIIGFVTFF. Residues 144-153 are Cytoplasmic-facing; sequence FPGAAPNVKK. Residues 154–174 traverse the membrane as a helical segment; the sequence is GVLPWHVLFGLFVYILALANA. His-159 is a binding site for heme b. Over 175–201 the chain is Extracellular; the sequence is ELGFLEKLTFLESSGLDKYGTEAFLVN. Residues 202–222 form a helical membrane-spanning segment; it reads FTALVVVLFGASVVVAAIAPV. At 223–236 the chain is on the cytoplasmic side; that stretch reads RLEEPQGYDPIPEN.

The cofactor is heme b.

The protein resides in the membrane. With respect to regulation, inhibited by diethylpyrocarbonate. Functionally, two-heme-containing cytochrome. Catalyzes ascorbate-dependent trans-membrane electron transfer by utilizing a concerted H(+)/e(-) transfer mechanism. In Zea mays (Maize), this protein is Ascorbate-specific transmembrane electron transporter 1 (ZCYB).